A 91-amino-acid chain; its full sequence is Small ribosomal subunit protein bS18 (91 aa).

It belongs to the bacterial ribosomal protein bS18 family. Part of the 30S ribosomal subunit. Forms a tight heterodimer with protein bS6.

In terms of biological role, binds as a heterodimer with protein bS6 to the central domain of the 16S rRNA, where it helps stabilize the platform of the 30S subunit. This chain is Small ribosomal subunit protein bS18, found in Wolbachia pipientis wMel.